A 90-amino-acid polypeptide reads, in one-letter code: Protein P18 (90 aa).

Transmembrane regions (helical) follow at residues 1-21 (MPFGLIVIGIILAIAAYRDTL), 37-57 (GFGYWVLAAVILGFAASIKPI), and 60-80 (PVNAFMILLMIVLLIRKRGAI).

The protein resides in the virion membrane. In terms of biological role, component of the phage injection machinery. Required for DNA injection in the membrane transformation event. Involved in the formation of the membrane tail tube to connect the virus interior with the host cytosol. Essential for viral infectivity. This Acinetobacter calcoaceticus (Arthrobacter siderocapsulatus) protein is Protein P18 (XVIII).